The sequence spans 205 residues: Thiamine-phosphate synthase (205 aa).

Residues 37–41 (QVREK) and asparagine 69 each bind 4-amino-2-methyl-5-(diphosphooxymethyl)pyrimidine. Mg(2+) is bound by residues aspartate 70 and aspartate 89. Serine 108 serves as a coordination point for 4-amino-2-methyl-5-(diphosphooxymethyl)pyrimidine. Residue 134–136 (TGS) coordinates 2-[(2R,5Z)-2-carboxy-4-methylthiazol-5(2H)-ylidene]ethyl phosphate. Residue lysine 137 participates in 4-amino-2-methyl-5-(diphosphooxymethyl)pyrimidine binding. Residues glycine 165 and 185–186 (IS) each bind 2-[(2R,5Z)-2-carboxy-4-methylthiazol-5(2H)-ylidene]ethyl phosphate.

It belongs to the thiamine-phosphate synthase family. Mg(2+) is required as a cofactor.

The enzyme catalyses 2-[(2R,5Z)-2-carboxy-4-methylthiazol-5(2H)-ylidene]ethyl phosphate + 4-amino-2-methyl-5-(diphosphooxymethyl)pyrimidine + 2 H(+) = thiamine phosphate + CO2 + diphosphate. The catalysed reaction is 2-(2-carboxy-4-methylthiazol-5-yl)ethyl phosphate + 4-amino-2-methyl-5-(diphosphooxymethyl)pyrimidine + 2 H(+) = thiamine phosphate + CO2 + diphosphate. It catalyses the reaction 4-methyl-5-(2-phosphooxyethyl)-thiazole + 4-amino-2-methyl-5-(diphosphooxymethyl)pyrimidine + H(+) = thiamine phosphate + diphosphate. The protein operates within cofactor biosynthesis; thiamine diphosphate biosynthesis; thiamine phosphate from 4-amino-2-methyl-5-diphosphomethylpyrimidine and 4-methyl-5-(2-phosphoethyl)-thiazole: step 1/1. Condenses 4-methyl-5-(beta-hydroxyethyl)thiazole monophosphate (THZ-P) and 2-methyl-4-amino-5-hydroxymethyl pyrimidine pyrophosphate (HMP-PP) to form thiamine monophosphate (TMP). This Clostridium botulinum (strain Loch Maree / Type A3) protein is Thiamine-phosphate synthase.